We begin with the raw amino-acid sequence, 74 residues long: U12-theraphotoxin-Hs1a (74 aa).

Positions 1–20 (MNVKILLLLVGLNLVMHSNA) are cleaved as a signal peptide. A propeptide spanning residues 21 to 40 (TGDSETNPAETLFIEEIFRR) is cleaved from the precursor. Cystine bridges form between Cys42–Cys56, Cys49–Cys61, and Cys55–Cys71.

This sequence belongs to the neurotoxin 35 family. As to expression, expressed by the venom gland.

The protein resides in the secreted. Putative ion channel inhibitor. The chain is U12-theraphotoxin-Hs1a from Cyriopagopus schmidti (Chinese bird spider).